We begin with the raw amino-acid sequence, 333 residues long: Adenosine deaminase (333 aa).

Zn(2+) contacts are provided by histidine 12 and histidine 14. Substrate is bound by residues histidine 14, aspartate 16, and glycine 170. Zn(2+) is bound at residue histidine 197. Residue glutamate 200 is the Proton donor of the active site. Residue aspartate 278 participates in Zn(2+) binding. Aspartate 279 contacts substrate.

Belongs to the metallo-dependent hydrolases superfamily. Adenosine and AMP deaminases family. Adenosine deaminase subfamily. Zn(2+) is required as a cofactor.

It carries out the reaction adenosine + H2O + H(+) = inosine + NH4(+). The catalysed reaction is 2'-deoxyadenosine + H2O + H(+) = 2'-deoxyinosine + NH4(+). Functionally, catalyzes the hydrolytic deamination of adenosine and 2-deoxyadenosine. This is Adenosine deaminase from Salmonella agona (strain SL483).